A 531-amino-acid chain; its full sequence is Beta-hexosaminidase subunit beta (531 aa).

An N-terminal signal peptide occupies residues 1-24 (MRHRGLGLAALLALLAAVAPRSSA). The N-linked (GlcNAc...) asparagine glycan is linked to asparagine 50. Cysteine 65 and cysteine 111 form a disulfide bridge. Asparagine 116, asparagine 164, and asparagine 301 each carry an N-linked (GlcNAc...) asparagine glycan. Cystine bridges form between cysteine 283-cysteine 334 and cysteine 508-cysteine 525. The active-site Proton donor is the glutamate 329.

Belongs to the glycosyl hydrolase 20 family. In terms of assembly, there are 3 forms of beta-hexosaminidase: hexosaminidase A is a heterodimer composed of one subunit alpha and one subunit beta (chain A and B); hexosaminidase B is a homodimer of two beta subunits (two chains A and B); hexosaminidase S is a homodimer of two alpha subunits. The composition of the dimer (isozyme A versus isozyme S) has a significant effect on the substrate specificity of the alpha subunit active site.

The protein localises to the lysosome. It localises to the cytoplasmic vesicle. It is found in the secretory vesicle. The protein resides in the cortical granule. The enzyme catalyses Hydrolysis of terminal non-reducing N-acetyl-D-hexosamine residues in N-acetyl-beta-D-hexosaminides.. The catalysed reaction is N-acetyl-beta-D-galactosaminyl-(1-&gt;4)-beta-D-3-sulfogalactosyl-(1-&gt;4)-beta-D-glucosyl-(1&lt;-&gt;1')-ceramide + H2O = a beta-D-3-sulfogalactosyl-(1-&gt;4)-beta-D-glucosyl-(1&lt;-&gt;1')-ceramide + N-acetyl-beta-D-galactosamine. It carries out the reaction a ganglioside GM2 (d18:1(4E)) + H2O = a ganglioside GM3 (d18:1(4E)) + N-acetyl-beta-D-galactosamine. It catalyses the reaction a ganglioside GM2 + H2O = a ganglioside GM3 + N-acetyl-beta-D-galactosamine. The enzyme catalyses beta-D-GalNAc-(1-&gt;4)-alpha-L-IdoA-(1-&gt;3)-beta-D-GalNAc-4-sulfate-(1-&gt;4)-alpha-L-IdoA-(1-&gt;3)-D-GalNAc-4-sulfate + H2O = alpha-L-IdoA-(1-&gt;3)-beta-D-GalNAc-4-sulfate-(1-&gt;4)-alpha-L-IdoA-(1-&gt;3)-D-GalNAc-4-sulfate + N-acetyl-D-galactosamine. The catalysed reaction is N-acetyl-beta-D-6-sulfogalactosaminyl-(1-&gt;4)-alpha-L-iduronyl-(1-&gt;3)-N-acetyl-D-6-sulfogalactosamine + H2O = alpha-L-iduronyl-(1-&gt;3)-N-acetyl-D-6-sulfogalactosamine + N-acetyl-D-6-sulfogalactosamine. With respect to regulation, addition of GM2A stimulates the hydrolysis of sulfated glycosphingolipid SM2 and the ganglioside GM2. Hydrolyzes the non-reducing end N-acetyl-D-hexosamine and/or sulfated N-acetyl-D-hexosamine of glycoconjugates, such as the oligosaccharide moieties from proteins and neutral glycolipids, or from certain mucopolysaccharides. The isozyme B does not hydrolyze each of these substrates, however hydrolyzes efficiently neutral oligosaccharide. Only the isozyme A is responsible for the degradation of GM2 gangliosides in the presence of GM2A. During fertilization is responsible, at least in part, for the zona block to polyspermy. Present in the cortical granules of non-activated oocytes, is exocytosed during the cortical reaction in response to oocyte activation and inactivates the sperm galactosyltransferase-binding site, accounting for the block in sperm binding to the zona pellucida. This Felis catus (Cat) protein is Beta-hexosaminidase subunit beta.